Reading from the N-terminus, the 177-residue chain is MSRVAKAPVSIPAGVEVTLNEQTLTVKGAKGSLTRVINNAVNVVIEDGVVKFLPVEGVVNAWAQAGTTRALVNNMVVGVSQGFERKLKLVGVGYRAKLVGADIDLTLGFSHPLVHKLPAGVTAECPSQTDIVLRGVDKQLIGQVAAEIRGYRPPEPYKGKGVRYDDEEVRRKEAKKK.

Residues arginine 152 to arginine 171 show a composition bias toward basic and acidic residues. The interval arginine 152 to lysine 177 is disordered.

This sequence belongs to the universal ribosomal protein uL6 family. As to quaternary structure, part of the 50S ribosomal subunit.

Functionally, this protein binds to the 23S rRNA, and is important in its secondary structure. It is located near the subunit interface in the base of the L7/L12 stalk, and near the tRNA binding site of the peptidyltransferase center. In Shewanella putrefaciens (strain CN-32 / ATCC BAA-453), this protein is Large ribosomal subunit protein uL6.